A 176-amino-acid chain; its full sequence is Isopentenyl-diphosphate Delta-isomerase (176 aa).

Positions 22 and 28 each coordinate Mn(2+). Residues 26 to 160 enclose the Nudix hydrolase domain; that stretch reads LRHKAVSVFV…PDRYTPWLRI (135 aa). Cys62 is an active-site residue. Mn(2+) is bound at residue His64. Glu82 contacts Mg(2+). 2 residues coordinate Mn(2+): Glu108 and Glu110. Glu110 is a catalytic residue.

It belongs to the IPP isomerase type 1 family. Requires Mg(2+) as cofactor. It depends on Mn(2+) as a cofactor.

It localises to the cytoplasm. The enzyme catalyses isopentenyl diphosphate = dimethylallyl diphosphate. The protein operates within isoprenoid biosynthesis; dimethylallyl diphosphate biosynthesis; dimethylallyl diphosphate from isopentenyl diphosphate: step 1/1. Its pathway is porphyrin-containing compound metabolism; chlorophyll biosynthesis. Catalyzes the 1,3-allylic rearrangement of the homoallylic substrate isopentenyl (IPP) to its highly electrophilic allylic isomer, dimethylallyl diphosphate (DMAPP). This Roseobacter denitrificans (strain ATCC 33942 / OCh 114) (Erythrobacter sp. (strain OCh 114)) protein is Isopentenyl-diphosphate Delta-isomerase.